A 267-amino-acid polypeptide reads, in one-letter code: Integral membrane protein 2C (267 aa).

The residue at position 37 (Thr-37) is a Phosphothreonine. Residues 55–75 (VGGVCYLSMGMVVLLMGLVFA) form a helical; Signal-anchor for type II membrane protein membrane-spanning segment. In terms of domain architecture, BRICHOS spans 136–230 (FGGGDPADII…LCNGKDTYRL (95 aa)). Cys-163 and Cys-222 are joined by a disulfide. Asn-169 is a glycosylation site (N-linked (GlcNAc...) asparagine).

This sequence belongs to the ITM2 family. In terms of assembly, interacts with BACE1. Interacts with APP. Interacts with STMN2. Post-translationally, type I membrane-bound, as well as soluble, furin has a pre-eminent role in ITM2C proteolytic processing. PCSK7 and PCSK5 may also be involved although to a lesser extent. The soluble form of PCSK7 is incapable of processing ITM2C. Fails to undergo shedding by ADAM10 and intramembrane cleavage by SPPL2B.

Its subcellular location is the lysosome membrane. It is found in the cell membrane. Its function is as follows. Negative regulator of amyloid-beta peptide production. May inhibit the processing of APP by blocking its access to alpha- and beta-secretase. Binding to the beta-secretase-cleaved APP C-terminal fragment is negligible, suggesting that ITM2C is a poor gamma-secretase cleavage inhibitor. May play a role in TNF-induced cell death and neuronal differentiation. The protein is Integral membrane protein 2C (ITM2C) of Pongo abelii (Sumatran orangutan).